Consider the following 545-residue polypeptide: Glucose-6-phosphate isomerase (545 aa).

Glu-351 (proton donor) is an active-site residue. Catalysis depends on residues His-382 and Lys-510.

The protein belongs to the GPI family.

The protein localises to the cytoplasm. The enzyme catalyses alpha-D-glucose 6-phosphate = beta-D-fructose 6-phosphate. The protein operates within carbohydrate biosynthesis; gluconeogenesis. Its pathway is carbohydrate degradation; glycolysis; D-glyceraldehyde 3-phosphate and glycerone phosphate from D-glucose: step 2/4. Functionally, catalyzes the reversible isomerization of glucose-6-phosphate to fructose-6-phosphate. This chain is Glucose-6-phosphate isomerase, found in Shewanella baltica (strain OS185).